A 442-amino-acid polypeptide reads, in one-letter code: Putative neutral sphingomyelinase (442 aa).

Glu-46 contributes to the Mg(2+) binding site. The active-site Proton acceptor is His-264. The segment at 309–330 (ALTGEDDQSSQHQPEIQCNGSS) is disordered. Positions 318 to 330 (SQHQPEIQCNGSS) are enriched in polar residues. Transmembrane regions (helical) follow at residues 362–384 (RILYYSAATFLFVLLVLLVEFTA) and 391–413 (IFLLLKFIVFGVILFCVFMASIW).

The protein belongs to the neutral sphingomyelinase family.

It localises to the membrane. The enzyme catalyses a sphingomyelin + H2O = phosphocholine + an N-acylsphing-4-enine + H(+). The protein operates within lipid metabolism; sphingolipid metabolism. This is Putative neutral sphingomyelinase from Drosophila melanogaster (Fruit fly).